Here is a 360-residue protein sequence, read N- to C-terminus: G-box-binding factor 2 (360 aa).

The segment covering 1 to 16 (MGSNEEGNPTNNSDKP) has biased composition (polar residues). Disordered regions lie at residues 1–26 (MGSN…EQSN) and 150–275 (KVGS…AETE). Over residues 164–184 (SQSSENDGSSNGSDGNTTGGE) the composition is skewed to low complexity. Positions 198 to 208 (TGERPSSQNSL) are enriched in polar residues. The span at 246 to 264 (NEKEVKREKRKQSNRESAR) shows a compositional bias: basic and acidic residues. Residues 249 to 312 (EVKREKRKQS…EKLRLENEAI (64 aa)) enclose the bZIP domain. The interval 251-270 (KREKRKQSNRESARRSRLRK) is basic motif. The leucine-zipper stretch occupies residues 277-312 (LSVKVDALVAENMSLRSKLGQLNNESEKLRLENEAI). A compositionally biased stretch (polar residues) spans 335–352 (NSVSGSKTVQHQLLNASP). Residues 335–360 (NSVSGSKTVQHQLLNASPITDPVAAS) form a disordered region.

Belongs to the bZIP family. DNA-binding heterodimer. Interacts with GBF4. Interacts with BZIP16 and BZIP68. In terms of tissue distribution, found in both light and dark grown leaves.

The protein resides in the nucleus. Functionally, binds to the G-box motif (5'-CCACGTGG-3') of the rbcS-1A gene promoter. G-box and G-box-like motifs are cis-acting elements defined in promoters of certain plant genes which are regulated by such diverse stimuli as light-induction or hormone control. GBF2 is found to bind asymmetrically to the G-box. This Arabidopsis thaliana (Mouse-ear cress) protein is G-box-binding factor 2 (GBF2).